Here is a 303-residue protein sequence, read N- to C-terminus: tRNA (guanine-N(7)-)-methyltransferase (303 aa).

Positions 1–64 (MPKPHQVQVI…STSDKISLPR (64 aa)) are disordered. Residues 10–38 (IKDRETQLREQQEAESKRRTYRDVKEETR) show a composition bias toward basic and acidic residues. Residues Gly-118, 141–142 (EI), 177–178 (NA), and Cys-197 each bind S-adenosyl-L-methionine. Asp-200 is a catalytic residue. S-adenosyl-L-methionine is bound at residue 275 to 277 (TEE).

This sequence belongs to the class I-like SAM-binding methyltransferase superfamily. TrmB family. As to quaternary structure, forms a complex with TRM82.

It localises to the nucleus. It catalyses the reaction guanosine(46) in tRNA + S-adenosyl-L-methionine = N(7)-methylguanosine(46) in tRNA + S-adenosyl-L-homocysteine. It participates in tRNA modification; N(7)-methylguanine-tRNA biosynthesis. In terms of biological role, catalyzes the formation of N(7)-methylguanine at position 46 (m7G46) in tRNA. In Scheffersomyces stipitis (strain ATCC 58785 / CBS 6054 / NBRC 10063 / NRRL Y-11545) (Yeast), this protein is tRNA (guanine-N(7)-)-methyltransferase.